Consider the following 211-residue polypeptide: Ubiquitin-conjugating enzyme E2 S (211 aa).

The 147-residue stretch at 11–157 (HVIRQVYKEV…ARLMTEIHAH (147 aa)) folds into the UBC core domain. The active-site Glycyl thioester intermediate is Cys-95. Over residues 157–167 (HSSSLRGKDPT) the composition is skewed to basic and acidic residues. Positions 157–211 (HSSSLRGKDPTDPCSSASVTGALGDGPMAKKHAGDRDKKLAAKKKTDKKRALRRL) are disordered. Basic residues predominate over residues 197–211 (AAKKKTDKKRALRRL).

It belongs to the ubiquitin-conjugating enzyme family.

It catalyses the reaction S-ubiquitinyl-[E1 ubiquitin-activating enzyme]-L-cysteine + [E2 ubiquitin-conjugating enzyme]-L-cysteine = [E1 ubiquitin-activating enzyme]-L-cysteine + S-ubiquitinyl-[E2 ubiquitin-conjugating enzyme]-L-cysteine.. The protein operates within protein modification; protein ubiquitination. Catalyzes the covalent attachment of ubiquitin to other proteins. Acts as an essential factor of the anaphase promoting complex/cyclosome (APC/C), a cell cycle-regulated ubiquitin ligase that controls progression through mitosis. Acts by specifically elongating 'Lys-11'-linked polyubiquitin chains initiated by the E2 enzyme ube2c/ubch10 on APC/C substrates, enhancing the degradation of APC/C substrates by the proteasome and promoting mitotic exit. In Aquarana catesbeiana (American bullfrog), this protein is Ubiquitin-conjugating enzyme E2 S (ube2s).